The sequence spans 191 residues: Thymidylate kinase (191 aa).

Glycine 7 to serine 14 lines the ATP pocket.

The protein belongs to the thymidylate kinase family.

It carries out the reaction dTMP + ATP = dTDP + ADP. Phosphorylation of dTMP to form dTDP in both de novo and salvage pathways of dTTP synthesis. This is Thymidylate kinase (tmk) from Helicobacter pylori (strain ATCC 700392 / 26695) (Campylobacter pylori).